Consider the following 518-residue polypeptide: ATP synthase subunit alpha (518 aa).

169–176 (GDRQTGKT) contributes to the ATP binding site.

The protein belongs to the ATPase alpha/beta chains family. In terms of assembly, F-type ATPases have 2 components, CF(1) - the catalytic core - and CF(0) - the membrane proton channel. CF(1) has five subunits: alpha(3), beta(3), gamma(1), delta(1), epsilon(1). CF(0) has three main subunits: a(1), b(2) and c(9-12). The alpha and beta chains form an alternating ring which encloses part of the gamma chain. CF(1) is attached to CF(0) by a central stalk formed by the gamma and epsilon chains, while a peripheral stalk is formed by the delta and b chains.

It is found in the cell membrane. It catalyses the reaction ATP + H2O + 4 H(+)(in) = ADP + phosphate + 5 H(+)(out). Functionally, produces ATP from ADP in the presence of a proton gradient across the membrane. The alpha chain is a regulatory subunit. This Mycoplasma genitalium (strain ATCC 33530 / DSM 19775 / NCTC 10195 / G37) (Mycoplasmoides genitalium) protein is ATP synthase subunit alpha.